We begin with the raw amino-acid sequence, 126 residues long: uncharacterized protein (126 aa).

This is an uncharacterized protein from Agrobacterium tumefaciens (strain 15955).